The chain runs to 250 residues: MSGHSKWATTKHKKAANDAKRGKEFAKLIKNIEVAARTGGGDPSANPTLDDMIKKAKKASVPNDNIERARKRGSGEEAGGADWQTIMYEGYGPNGVAVLIECLTDNRNRAASEVRTAMSKNGGNMAENGAVSYMFKRRGFVLVNKGELTEDDVLMAVLDAGAEEVSDAGDKFEILSAPGDVAAIRDALAEAEIEVEDSDSDFRADVLVPLEANDARKIFRLIDALEESDDVQNVYTNMDLSDEVLAELEA.

Residues 1–22 (MSGHSKWATTKHKKAANDAKRG) form a disordered region.

The protein belongs to the TACO1 family.

The protein resides in the cytoplasm. This chain is Probable transcriptional regulatory protein DIP1378, found in Corynebacterium diphtheriae (strain ATCC 700971 / NCTC 13129 / Biotype gravis).